The chain runs to 383 residues: S-adenosylmethionine synthase (383 aa).

ATP is bound at residue histidine 15. Mg(2+) is bound at residue aspartate 17. Glutamate 43 is a K(+) binding site. L-methionine contacts are provided by glutamate 56 and glutamine 99. Residues 99–109 (QSPDINQGVDR) form a flexible loop region. ATP-binding positions include 164–166 (DAK), 230–231 (RF), aspartate 239, 245–246 (RK), alanine 262, and lysine 266. Aspartate 239 lines the L-methionine pocket. Lysine 270 contributes to the L-methionine binding site.

Belongs to the AdoMet synthase family. In terms of assembly, homotetramer; dimer of dimers. It depends on Mg(2+) as a cofactor. Requires K(+) as cofactor.

It localises to the cytoplasm. The catalysed reaction is L-methionine + ATP + H2O = S-adenosyl-L-methionine + phosphate + diphosphate. The protein operates within amino-acid biosynthesis; S-adenosyl-L-methionine biosynthesis; S-adenosyl-L-methionine from L-methionine: step 1/1. Functionally, catalyzes the formation of S-adenosylmethionine (AdoMet) from methionine and ATP. The overall synthetic reaction is composed of two sequential steps, AdoMet formation and the subsequent tripolyphosphate hydrolysis which occurs prior to release of AdoMet from the enzyme. The polypeptide is S-adenosylmethionine synthase (Shewanella loihica (strain ATCC BAA-1088 / PV-4)).